Consider the following 203-residue polypeptide: Glycerol-3-phosphate acyltransferase (203 aa).

6 consecutive transmembrane segments (helical) span residues 3 to 23, 51 to 71, 74 to 94, 116 to 136, 140 to 160, and 164 to 178; these read ILLATVAAYLIGSVSFAVVVS, KAAILTLVGDAFKGWLAVWLV, FGIGGEIGVALAAIAVFLGHL, AVHPVLGLATALTWLIVAFFF, SLAALVAAVFAPIFDVFLFGT, and PVAWAVLAMSVLLIW.

Belongs to the PlsY family. As to quaternary structure, probably interacts with PlsX.

The protein localises to the cell inner membrane. It carries out the reaction an acyl phosphate + sn-glycerol 3-phosphate = a 1-acyl-sn-glycero-3-phosphate + phosphate. It functions in the pathway lipid metabolism; phospholipid metabolism. Its function is as follows. Catalyzes the transfer of an acyl group from acyl-phosphate (acyl-PO(4)) to glycerol-3-phosphate (G3P) to form lysophosphatidic acid (LPA). This enzyme utilizes acyl-phosphate as fatty acyl donor, but not acyl-CoA or acyl-ACP. This Burkholderia pseudomallei (strain 1710b) protein is Glycerol-3-phosphate acyltransferase.